Reading from the N-terminus, the 464-residue chain is Delta(5) fatty acid desaturase A (464 aa).

The Cytochrome b5 heme-binding domain maps to 13-90 (GKQYSWSELA…LKNYEIGYIS (78 aa)). Residues His-48 and His-71 each contribute to the heme site. 2 helical membrane-spanning segments follow: residues 125–145 (AVSI…TYYL) and 153–173 (FYLN…FSMH). The Histidine box-1 motif lies at 176 to 180 (HDSCH). Residues 212–217 (HVIGHH) carry the Histidine box-2 motif. The chain crosses the membrane as a helical span at residues 318 to 338 (FTDLICYFLIAEFVFGWYLTI). The short motif at 396 to 400 (QVVHH) is the Histidine box-3 element.

It belongs to the fatty acid desaturase type 1 family. Requires Fe cation as cofactor.

The protein localises to the membrane. Its function is as follows. Specific for desaturation of the 5 position in C16 and C18 fatty acids. In Dictyostelium discoideum (Social amoeba), this protein is Delta(5) fatty acid desaturase A (fadA).